A 394-amino-acid polypeptide reads, in one-letter code: Elongation factor Tu (394 aa).

The region spanning 10-204 (KPHVNVGTIG…ALDTYIPEPE (195 aa)) is the tr-type G domain. The tract at residues 19 to 26 (GHVDHGKT) is G1. 19–26 (GHVDHGKT) contacts GTP. Thr26 is a binding site for Mg(2+). The segment at 60-64 (GITIN) is G2. Residues 81 to 84 (DCPG) are G3. Residues 81 to 85 (DCPGH) and 136 to 139 (NKCD) each bind GTP. A G4 region spans residues 136–139 (NKCD). Residues 174–176 (SAL) form a G5 region.

Belongs to the TRAFAC class translation factor GTPase superfamily. Classic translation factor GTPase family. EF-Tu/EF-1A subfamily. As to quaternary structure, monomer.

Its subcellular location is the cytoplasm. The enzyme catalyses GTP + H2O = GDP + phosphate + H(+). Its function is as follows. GTP hydrolase that promotes the GTP-dependent binding of aminoacyl-tRNA to the A-site of ribosomes during protein biosynthesis. The polypeptide is Elongation factor Tu (Shewanella denitrificans (strain OS217 / ATCC BAA-1090 / DSM 15013)).